The primary structure comprises 252 residues: Imidazole glycerol phosphate synthase subunit HisF (252 aa).

Catalysis depends on residues Asp-11 and Asp-130.

The protein belongs to the HisA/HisF family. As to quaternary structure, heterodimer of HisH and HisF.

It localises to the cytoplasm. The enzyme catalyses 5-[(5-phospho-1-deoxy-D-ribulos-1-ylimino)methylamino]-1-(5-phospho-beta-D-ribosyl)imidazole-4-carboxamide + L-glutamine = D-erythro-1-(imidazol-4-yl)glycerol 3-phosphate + 5-amino-1-(5-phospho-beta-D-ribosyl)imidazole-4-carboxamide + L-glutamate + H(+). It functions in the pathway amino-acid biosynthesis; L-histidine biosynthesis; L-histidine from 5-phospho-alpha-D-ribose 1-diphosphate: step 5/9. In terms of biological role, IGPS catalyzes the conversion of PRFAR and glutamine to IGP, AICAR and glutamate. The HisF subunit catalyzes the cyclization activity that produces IGP and AICAR from PRFAR using the ammonia provided by the HisH subunit. The chain is Imidazole glycerol phosphate synthase subunit HisF from Bacillus thuringiensis (strain Al Hakam).